The primary structure comprises 229 residues: Probable GTP-binding protein EngB (229 aa).

Residues aspartate 53–aspartate 228 enclose the EngB-type G domain. GTP is bound by residues glycine 61–serine 68, glycine 88–glutamate 92, aspartate 106–glycine 109, threonine 173–aspartate 176, and threonine 207–serine 209. The Mg(2+) site is built by serine 68 and threonine 90.

Belongs to the TRAFAC class TrmE-Era-EngA-EngB-Septin-like GTPase superfamily. EngB GTPase family. Requires Mg(2+) as cofactor.

Its function is as follows. Necessary for normal cell division and for the maintenance of normal septation. In Caulobacter vibrioides (strain NA1000 / CB15N) (Caulobacter crescentus), this protein is Probable GTP-binding protein EngB.